A 312-amino-acid polypeptide reads, in one-letter code: 4-hydroxy-3-methylbut-2-enyl diphosphate reductase (312 aa).

C15 provides a ligand contact to [4Fe-4S] cluster. Positions 44 and 77 each coordinate (2E)-4-hydroxy-3-methylbut-2-enyl diphosphate. Dimethylallyl diphosphate contacts are provided by H44 and H77. Residues H44 and H77 each coordinate isopentenyl diphosphate. Position 99 (C99) interacts with [4Fe-4S] cluster. H127 is a binding site for (2E)-4-hydroxy-3-methylbut-2-enyl diphosphate. H127 contacts dimethylallyl diphosphate. H127 is an isopentenyl diphosphate binding site. E129 (proton donor) is an active-site residue. T167 serves as a coordination point for (2E)-4-hydroxy-3-methylbut-2-enyl diphosphate. C197 provides a ligand contact to [4Fe-4S] cluster. (2E)-4-hydroxy-3-methylbut-2-enyl diphosphate contacts are provided by S225, S226, N227, and S269. Residues S225, S226, N227, and S269 each contribute to the dimethylallyl diphosphate site. Isopentenyl diphosphate contacts are provided by S225, S226, N227, and S269.

Belongs to the IspH family. [4Fe-4S] cluster is required as a cofactor.

It carries out the reaction isopentenyl diphosphate + 2 oxidized [2Fe-2S]-[ferredoxin] + H2O = (2E)-4-hydroxy-3-methylbut-2-enyl diphosphate + 2 reduced [2Fe-2S]-[ferredoxin] + 2 H(+). It catalyses the reaction dimethylallyl diphosphate + 2 oxidized [2Fe-2S]-[ferredoxin] + H2O = (2E)-4-hydroxy-3-methylbut-2-enyl diphosphate + 2 reduced [2Fe-2S]-[ferredoxin] + 2 H(+). It participates in isoprenoid biosynthesis; dimethylallyl diphosphate biosynthesis; dimethylallyl diphosphate from (2E)-4-hydroxy-3-methylbutenyl diphosphate: step 1/1. The protein operates within isoprenoid biosynthesis; isopentenyl diphosphate biosynthesis via DXP pathway; isopentenyl diphosphate from 1-deoxy-D-xylulose 5-phosphate: step 6/6. In terms of biological role, catalyzes the conversion of 1-hydroxy-2-methyl-2-(E)-butenyl 4-diphosphate (HMBPP) into a mixture of isopentenyl diphosphate (IPP) and dimethylallyl diphosphate (DMAPP). Acts in the terminal step of the DOXP/MEP pathway for isoprenoid precursor biosynthesis. The chain is 4-hydroxy-3-methylbut-2-enyl diphosphate reductase from Aromatoleum aromaticum (strain DSM 19018 / LMG 30748 / EbN1) (Azoarcus sp. (strain EbN1)).